Consider the following 137-residue polypeptide: Large ribosomal subunit protein uL16 (137 aa).

Belongs to the universal ribosomal protein uL16 family. Part of the 50S ribosomal subunit.

Its function is as follows. Binds 23S rRNA and is also seen to make contacts with the A and possibly P site tRNAs. This is Large ribosomal subunit protein uL16 from Rhodopseudomonas palustris (strain BisB5).